Here is a 178-residue protein sequence, read N- to C-terminus: Large ribosomal subunit protein uL6 (178 aa).

The protein belongs to the universal ribosomal protein uL6 family. In terms of assembly, part of the 50S ribosomal subunit.

Its function is as follows. This protein binds to the 23S rRNA, and is important in its secondary structure. It is located near the subunit interface in the base of the L7/L12 stalk, and near the tRNA binding site of the peptidyltransferase center. The protein is Large ribosomal subunit protein uL6 of Aliarcobacter butzleri (strain RM4018) (Arcobacter butzleri).